The following is a 51-amino-acid chain: Suberization-associated anionic peroxidase 1 (51 aa).

Residue His30 coordinates heme. Thr31 contributes to the Ca(2+) binding site.

Belongs to the peroxidase family. Classical plant (class III) peroxidase subfamily. It depends on heme b as a cofactor. Ca(2+) is required as a cofactor.

Its subcellular location is the secreted. The enzyme catalyses 2 a phenolic donor + H2O2 = 2 a phenolic radical donor + 2 H2O. Removal of H(2)O(2), oxidation of toxic reductants, biosynthesis and degradation of lignin, suberization, auxin catabolism, response to environmental stresses such as wounding, pathogen attack and oxidative stress. These functions might be dependent on each isozyme/isoform in each plant tissue. In terms of biological role, suggested to catalyze the deposition of the aromatic residues of suberin on the cell wall and thus play a role in cell-suberization. The polypeptide is Suberization-associated anionic peroxidase 1 (Capsicum annuum (Capsicum pepper)).